A 287-amino-acid chain; its full sequence is Phosphoribosylaminoimidazole-succinocarboxamide synthase (287 aa).

The protein belongs to the SAICAR synthetase family.

It carries out the reaction 5-amino-1-(5-phospho-D-ribosyl)imidazole-4-carboxylate + L-aspartate + ATP = (2S)-2-[5-amino-1-(5-phospho-beta-D-ribosyl)imidazole-4-carboxamido]succinate + ADP + phosphate + 2 H(+). It functions in the pathway purine metabolism; IMP biosynthesis via de novo pathway; 5-amino-1-(5-phospho-D-ribosyl)imidazole-4-carboxamide from 5-amino-1-(5-phospho-D-ribosyl)imidazole-4-carboxylate: step 1/2. The sequence is that of Phosphoribosylaminoimidazole-succinocarboxamide synthase from Neisseria meningitidis serogroup B (strain ATCC BAA-335 / MC58).